A 362-amino-acid chain; its full sequence is MALSTSAIGFEGYENRLEISFFEAGIFSDPEGRGLRALSKEQLDKVLKPAECTIVSSLSNNEVDSYVLSESSLFVYPYKIIIKTCGTTKLLLSIPPILELADGLSLKVKSVKYTRGSFNFPEVQPYPHRNFSEEVAILDSYFGKLSTGSKAYVMGGAGKQQQWHVYSASAESAENTFPIYTLEMCMTGLDKKSASVFFKTQSSSAAVMTDASGIRKILPGSEICDFDFEPCGYSMNAVEGGAISPIHVTPEDGFSYASFEAMGYDFKDVNLDALIQRVLSCFQPAEFSVALHCDSIGEKLDSVFKLDVKGYACGERSYEGLNKGGSIMYCGFTSTGSCGSPRSTLLCCWSENEDEEGEKKHF.

Active-site residues include Glu-11 and Glu-14. The active-site Schiff-base intermediate with substrate; via pyruvic acid is the Ser-71. At Ser-71 the chain carries Pyruvic acid (Ser); by autocatalysis. Cys-85 (proton donor; for catalytic activity) is an active-site residue. Active-site proton acceptor; for processing activity residues include Ser-234 and His-247.

The protein belongs to the eukaryotic AdoMetDC family. The cofactor is pyruvate. In terms of processing, is synthesized initially as an inactive proenzyme. Formation of the active enzyme involves a self-maturation process in which the active site pyruvoyl group is generated from an internal serine residue via an autocatalytic post-translational modification. Two non-identical subunits are generated from the proenzyme in this reaction, and the pyruvate is formed at the N-terminus of the alpha chain, which is derived from the carboxyl end of the proenzyme. The post-translation cleavage follows an unusual pathway, termed non-hydrolytic serinolysis, in which the side chain hydroxyl group of the serine supplies its oxygen atom to form the C-terminus of the beta chain, while the remainder of the serine residue undergoes an oxidative deamination to produce ammonia and the pyruvoyl group blocking the N-terminus of the alpha chain.

It catalyses the reaction S-adenosyl-L-methionine + H(+) = S-adenosyl 3-(methylsulfanyl)propylamine + CO2. Its pathway is amine and polyamine biosynthesis; S-adenosylmethioninamine biosynthesis; S-adenosylmethioninamine from S-adenosyl-L-methionine: step 1/1. This chain is S-adenosylmethionine decarboxylase proenzyme (SAMDC), found in Ipomoea batatas (Sweet potato).